Consider the following 103-residue polypeptide: Integration host factor subunit beta (103 aa).

A disordered region spans residues 62–81 (RNPKTGESVALPGKHVPHFK).

It belongs to the bacterial histone-like protein family. As to quaternary structure, heterodimer of an alpha and a beta chain.

Functionally, this protein is one of the two subunits of integration host factor, a specific DNA-binding protein that functions in genetic recombination as well as in transcriptional and translational control. In Xanthomonas campestris pv. campestris (strain B100), this protein is Integration host factor subunit beta.